We begin with the raw amino-acid sequence, 448 residues long: Oxysterol-binding protein homolog 6 (448 aa).

A disordered region spans residues 1–42 (MGSKKLTVGSDSHRLSKSSFSSNKSSHSATKDQPIDTDDIDE). At Ser-16 the chain carries Phosphoserine. Over residues 17-28 (KSSFSSNKSSHS) the composition is skewed to low complexity. Residues 54 to 391 (IISQLRPGCD…PGEDLDYCIY (338 aa)) are OSBP-related domain (ORD). A 1,2-diacyl-sn-glycero-3-phospho-(1D-myo-inositol 4-phosphate) contacts are provided by residues 64-69 (LTRITL), 126-129 (KPLN), and 157-158 (HH). Residues 64-69 (LTRITL) and Asn-129 each bind a 1,2-diacyl-sn-glycero-3-phospho-L-serine. Residue Ser-183 coordinates a 1,2-diacyl-sn-glycero-3-phospho-L-serine. Residues Lys-351, Glu-355, and Arg-359 each coordinate a 1,2-diacyl-sn-glycero-3-phospho-(1D-myo-inositol 4-phosphate).

The protein belongs to the OSBP family. Interacts with the AAA ATPase VPS4; regulates OSH6 membrane association. VPS4 is required for membrane dissociation of OSH6.

It localises to the cytoplasm. Its subcellular location is the cell membrane. The protein resides in the endoplasmic reticulum membrane. It catalyses the reaction a 1,2-diacyl-sn-glycero-3-phospho-L-serine(in) = a 1,2-diacyl-sn-glycero-3-phospho-L-serine(out). Its function is as follows. Lipid transport protein (LTP) involved in non-vesicular transfer of lipids between membranes. Functions in phosphoinositide-coupled directional transport of various lipids by carrying the lipid molecule in a hydrophobic pocket and transferring it between membranes through the cytosol. Involved in maintenance of intracellular sterol distribution and homeostasis. Catalyzes the lipid countertransport between the endoplasmic reticulum (ER) and the plasma membrane (PM). Specifically exchanges phosphatidylserine (PS) with phosphatidylinositol 4-phosphate (PI4P), delivering phosphatidylserine to the PM in exchange for PI4P, which is delivered to the ER-localized PI4P phosphatase SAC1 for degradation. Thus, by maintaining a PI4P gradient at the ER/PM interface, SAC1 drives PS transport. Binds phosphatidylserine and PI4P in a mutually exclusive manner. Also binds phosphatidic acid (PA). The sequence is that of Oxysterol-binding protein homolog 6 from Saccharomyces cerevisiae (strain ATCC 204508 / S288c) (Baker's yeast).